Here is a 590-residue protein sequence, read N- to C-terminus: Bacillolysin (590 aa).

Residues 1–24 (MKKVWFSLLGGAMLLGSVASGASA) form the signal peptide. Residues 25–286 (ESSVSGPAQL…GSIVFQYDII (262 aa)) constitute a propeptide, activation peptide. Residues D339, D341, and D419 each contribute to the Ca(2+) site. H423 is a binding site for Zn(2+). E424 is an active-site residue. Residues H427 and E447 each coordinate Zn(2+). 5 residues coordinate Ca(2+): D466, Y469, T470, I473, and D476. The active-site Proton donor is the H507.

The protein belongs to the peptidase M4 family. The cofactor is Ca(2+). Zn(2+) serves as cofactor.

Its subcellular location is the secreted. The catalysed reaction is Similar, but not identical, to that of thermolysin.. Functionally, involved in the generation of beta- and alpha-amylases from the large amylase precursor. The polypeptide is Bacillolysin (npr) (Paenibacillus polymyxa (Bacillus polymyxa)).